Consider the following 810-residue polypeptide: Abnormal pharyngeal pumping eat-20 (810 aa).

Residues 1 to 20 form the signal peptide; the sequence is MTTFCRVLLIFGIYVAVCCA. Residues 21-748 are Extracellular-facing; the sequence is QSVEDDVFHF…GKQSSAAASW (728 aa). N-linked (GlcNAc...) asparagine glycosylation is found at N90, N171, and N232. EGF-like domains lie at 220-257, 258-293, and 301-335; these read PPSP…DRCE, LDVC…LLCE, and VAPI…ANCN. 9 disulfide bridges follow: C224–C235, C229–C245, C247–C256, C261–C272, C266–C281, C283–C292, C305–C314, C309–C323, and C325–C334. The N-linked (GlcNAc...) asparagine glycan is linked to N371. Residues 522–531 show a composition bias toward low complexity; sequence FAPTTGTQQP. 2 disordered regions span residues 522 to 567 and 684 to 738; these read FAPT…STMQ and PHPQ…HTSS. The span at 542-558 shows a compositional bias: acidic residues; sequence DENEEEEEEETTEETEE. The chain crosses the membrane as a helical span at residues 749–769; that stretch reads IIAIIALIVLGLLLLATSLFI. The Cytoplasmic segment spans residues 770-810; the sequence is LRYIRQSRKLHGKYNPAREEHNLSAAYAMPMSHIAKEERLI.

Highly expressed in the pharynx, circumpharyngeal cells, pharyngeal-intestinal valve and a subset of neurons in larval and embryonic stages. Also moderately expressed in the lining of the intestine, coelomocytes, labial process bundles and some hypodermal cells. In adults, it is predominantly expressed in the pharynx, the pharyngeal-intenstinal valve, some circumpharyngeal cells, m3, m4 and m6 pharyngeal muscles, and IL1, OLQ, BAG and ALN neurons. Weaker expression is observed in labial process bundles, coelomocytes, the ventral hypodermal ridge, the vulval hypodermis and the sensory rays of the adult male tail.

Its subcellular location is the membrane. Its function is as follows. Regulates pharyngeal pumping during feeding. The sequence is that of Abnormal pharyngeal pumping eat-20 (eat-20) from Caenorhabditis elegans.